The primary structure comprises 414 residues: Arrestin domain-containing protein 3 (414 aa).

Short sequence motifs (PPxY motif) lie at residues P346 to Y349 and P391 to Y394. The interval L393–R414 is disordered. Residues A405–R414 are compositionally biased toward basic and acidic residues.

Belongs to the arrestin family. As to quaternary structure, interacts (via PPxY motifs) with NEDD4 (via WW domains). Interacts with ADRB2. Interacts with ADRB3. Interacts with HGS (via PPxY motifs). Does not bind TXN (thioredoxin). Interacts with ITCH.

Its subcellular location is the cytoplasm. It localises to the cell membrane. It is found in the lysosome. The protein resides in the endosome. The protein localises to the early endosome. Adapter protein that plays a role in regulating cell-surface expression of adrenergic receptors and probably also other G protein-coupled receptors. Plays a role in NEDD4-mediated ubiquitination and endocytosis af activated ADRB2 and subsequent ADRB2 degradation. May recruit NEDD4 to ADRB2. Alternatively, may function as adapter protein that does not play a major role in recruiting NEDD4 to ADRB2, but rather plays a role in a targeting ADRB2 to endosomes. This chain is Arrestin domain-containing protein 3 (ARRDC3), found in Bos taurus (Bovine).